A 174-amino-acid polypeptide reads, in one-letter code: Zinc finger AN1 domain-containing stress-associated protein 15 (174 aa).

The segment at 1 to 61 (MAQESCDLNK…TPPAAAAAAS (61 aa)) is disordered. The segment covering 18–41 (PSSSSSPSPSPTTASPSPPTAQMT) has biased composition (low complexity). Residues 42 to 54 (EPPPPQSTPPTPP) are compositionally biased toward pro residues. The AN1-type zinc-finger motif lies at 109-155 (VLFVNRCNVCRKRVGLTGFRCRCGELFCPRHRHSETHECSFDYKTAG). The Zn(2+) site is built by Cys-115, Cys-118, Cys-129, Cys-131, Cys-136, His-139, His-145, and Cys-147.

Functionally, may be involved in environmental stress response. The polypeptide is Zinc finger AN1 domain-containing stress-associated protein 15 (SAP15) (Oryza sativa subsp. japonica (Rice)).